The chain runs to 117 residues: MTRAKSGKISKNRHKKILKLAKGYRGRANSCFRVAIEKVEKALQYAYRDRRNRKRDFRGLWIQRINAAVREHGLVYSQFMGALKKTEIAIDRKVLAELAVNNSDGFVSIVEKAKAHI.

Belongs to the bacterial ribosomal protein bL20 family.

In terms of biological role, binds directly to 23S ribosomal RNA and is necessary for the in vitro assembly process of the 50S ribosomal subunit. It is not involved in the protein synthesizing functions of that subunit. The polypeptide is Large ribosomal subunit protein bL20 (Rickettsia rickettsii (strain Iowa)).